The following is a 266-amino-acid chain: GATA zinc finger domain-containing protein 1 (266 aa).

A GATA-type zinc finger spans residues Cys-9–Cys-33. Residues Thr-59–Ser-72 show a composition bias toward low complexity. The tract at residues Thr-59–Lys-112 is disordered. A Glycyl lysine isopeptide (Lys-Gly) (interchain with G-Cter in SUMO2) cross-link involves residue Lys-259.

As to quaternary structure, component of a chromatin complex, at least composed of KDM5A, GATAD1 and EMSY. Expressed in the eye (lens, ciliary body, retina, sclera and conjunctiva) at postnatal day 2 and 10. Not detected anywhere at postnatal day 14.

The protein localises to the nucleus. Functionally, component of some chromatin complex recruited to chromatin sites methylated 'Lys-4' of histone H3 (H3K4me), with a preference for trimethylated form (H3K4me3). The sequence is that of GATA zinc finger domain-containing protein 1 (Gatad1) from Mus musculus (Mouse).